The primary structure comprises 312 residues: GATA transcription factor 6 (312 aa).

Disordered stretches follow at residues 1 to 33 (MESVELTLKNSNMKDKTLTGGAQNGDDFSVDDL), 56 to 77 (QRKRGVSDENTLHRSNDFSTAD), and 136 to 186 (KSQH…PLWL). The segment covering 56–71 (QRKRGVSDENTLHRSN) has biased composition (basic and acidic residues). The span at 142-151 (VKTRPKRART) shows a compositional bias: basic residues. Residues 143–150 (KTRPKRAR) carry the Nuclear localization signal motif. Positions 157-186 (SHGSQSLTDSSSSSTTSSSSSPRPSSPLWL) are enriched in low complexity. The segment at 217–271 (QTQTRQCGHCGVQKTPQWRAGPLGAKTLCNACGVRYKSGRLLPEYRPACSPTFSS) adopts a GATA-type zinc-finger fold.

This sequence belongs to the type IV zinc-finger family. Class A subfamily.

The protein resides in the nucleus. Transcriptional activator that specifically binds 5'-GATA-3' or 5'-GAT-3' motifs within gene promoters. May be involved in the regulation of some light-responsive genes. The chain is GATA transcription factor 6 (GATA6) from Arabidopsis thaliana (Mouse-ear cress).